A 193-amino-acid polypeptide reads, in one-letter code: Ion-translocating oxidoreductase complex subunit A (193 aa).

6 helical membrane-spanning segments follow: residues 4–24 (FFFILLSTALVNNVVLVKFLG), 39–59 (IGMGLATTFVLTLAAGASWMV), 71–91 (FLRILSLILVIAAIVQFIEVV), 102–122 (ALGIYLPLITTNCAVLGVALL), 134–154 (LLYGFGSASGFTLVLVIFAGM), and 167–187 (FAGAPIAFISAGLLSMAFMGF).

The protein belongs to the NqrDE/RnfAE family. In terms of assembly, the complex is composed of six subunits: RnfA, RnfB, RnfC, RnfD, RnfE and RnfG.

Its subcellular location is the cellular chromatophore membrane. Functionally, part of a membrane-bound complex that couples electron transfer with translocation of ions across the membrane. This chain is Ion-translocating oxidoreductase complex subunit A, found in Cereibacter sphaeroides (strain ATCC 17029 / ATH 2.4.9) (Rhodobacter sphaeroides).